The following is a 602-amino-acid chain: Zinc finger MYND domain-containing protein 11 (602 aa).

Positions 6–82 (KRRQADTKAI…CKGSKAGIEQ (77 aa)) constitute an SAMD1-like winged helix (WH) domain. The PHD-type zinc finger occupies 100–148 (DWYCFECHLPGEVLICDLCFRVYHSKCLSDEFRLRDSSSHWQCPVCRSI). The Bromo domain maps to 149-255 (KKKHSNKQEM…KDTCHELDEL (107 aa)). The Zn(2+) site is built by Cys-258, Cys-261, Cys-277, and His-281. One can recognise a PWWP domain in the interval 280 to 331 (NHELVWAKMKGFGFWPAKVMQKEDNQVDVRFFGHHHQRAWIPSENIQDITVN). Residues 291 to 310 (FGFWPAKVMQKEDNQVDVRF) form an aromatic cage required for H3.3K36me3-specific binding region. Lys-366 participates in a covalent cross-link: Glycyl lysine isopeptide (Lys-Gly) (interchain with G-Cter in SUMO2). The interval 366–461 (KNEDRGEEEA…HRSTQTTSDG (96 aa)) is disordered. A Nuclear localization signal motif is present at residues 394–400 (RAKKGRR). Glycyl lysine isopeptide (Lys-Gly) (interchain with G-Cter in SUMO2) cross-links involve residues Lys-407 and Lys-408. Ser-421 carries the phosphoserine modification. The segment covering 435–461 (SVSTQTKKLSASSPRMLHRSTQTTSDG) has biased composition (polar residues). Positions 563, 566, 574, 575, 581, 585, 594, and 598 each coordinate Zn(2+). The segment at 563–598 (CYNCEEEAMYHCCWNTSYCSIKCQQEHWHAEHKRTC) adopts an MYND-type zinc-finger fold.

Homooligomer; forms homooligomers via its C-terminus. Interacts with histone H3.3 trimethylated at 'Lys-36' (H3.3K36me3). Interacts (via MYND-type zinc finger) with NCOR1. Interacts (via MYND-type zinc finger) with MGA protein (via PXLXP motif). Interacts (via MYND-type zinc finger) with EZH2. Interacts with EMSY and E2F6. Interacts with PIAS1 and UBE2I. Post-translationally, ubiquitinated, leading to proteasomal degradation. Sumoylated following its interaction with PIAS1 and UBE2I.

Its subcellular location is the nucleus. The protein resides in the chromosome. Functionally, chromatin reader that specifically recognizes and binds histone H3.3 trimethylated at 'Lys-36' (H3.3K36me3) and regulates RNA polymerase II elongation. Does not bind other histone H3 subtypes (H3.1 or H3.2). Colocalizes with highly expressed genes and functions as a transcription corepressor by modulating RNA polymerase II at the elongation stage. Binds non-specifically to dsDNA. Acts as a tumor-suppressor by repressing a transcriptional program essential for tumor cell growth. The sequence is that of Zinc finger MYND domain-containing protein 11 (Zmynd11) from Mus musculus (Mouse).